Here is a 540-residue protein sequence, read N- to C-terminus: Zinc transporter ZIP5 (540 aa).

Positions 1 to 20 (MMGSPVSHLLAGFCVWVVLG) are cleaved as a signal peptide. At 21 to 212 (WVGGSVPNLG…PAPPGDLLSA (192 aa)) the chain is on the extracellular side. The N-linked (GlcNAc...) asparagine glycan is linked to N50. Positions 78-101 (HGPLTGRAASPAADNSTHRPQNPE) are disordered. Polar residues predominate over residues 90 to 101 (ADNSTHRPQNPE). The N-linked (GlcNAc...) asparagine glycan is linked to N160. The chain crosses the membrane as a helical span at residues 213-233 (LLQSALAVLLLSLPSPLSLLL). Over 234–244 (LRLLGPRLLRP) the chain is Cytoplasmic. Residues 245–265 (LLGFLGALAVGTLCGDALLHL) traverse the membrane as a helical segment. The Extracellular segment spans residues 266–287 (LPHAQEGRHAGPGGLPEKDLGP). Residues 288 to 308 (GLSVLGGLFLLFVLENMLGLL) traverse the membrane as a helical segment. The Cytoplasmic portion of the chain corresponds to 309–444 (RHRGLRPRCC…LLQSGLSFRR (136 aa)). The interval 324 to 377 (NLETRNLDPENGSGMALQPLQAAPEPGAQGQREKNSQHPPALAPPGHQGHSHGH) is disordered. A Phosphoserine modification is found at S336. Pros-methylhistidine is present on H375. Residues 445-465 (LLLLSLVSGALGLGGAVLGVG) traverse the membrane as a helical segment. The Extracellular segment spans residues 466 to 470 (LSLGP). The chain crosses the membrane as a helical span at residues 471–491 (VPLTPWVFGVTAGVFLYVALV). At 492-508 (DMLPALLRPPEPLPTPH) the chain is on the cytoplasmic side. A helical transmembrane segment spans residues 509–529 (VLLQGLGLLLGGGLMLAITLL). At 530–540 (EERLLPVTTEG) the chain is on the extracellular side.

This sequence belongs to the ZIP transporter (TC 2.A.5) family. In terms of assembly, homodimer. Methylated at His-375 by METTL9. In terms of processing, N-Glycosylated. In terms of tissue distribution, expressed in liver, kidney, pancreas, small intestine, colon, spleen, fetal liver and fetal kidney.

It localises to the basolateral cell membrane. It carries out the reaction Zn(2+)(in) = Zn(2+)(out). Uniporter that transports zinc(2+) into polarized cells of enterocytes, pancreatic acinar and endoderm cells across the basolateral membrane and participates, notably, in zinc excretion from the intestine by the uptake of zinc from the blood into the intestine. The transport mechanism is temperature- and concentration-dependent and saturable. In addition, is also a high affinity copper transporter in vitro. Also may regulate glucose-stimulated insulin secretion (GSIS) in islets primarily through the zinc-activated SIRT1-PPARGC1A axis. Could regulate the BMP/TGF-beta (bone morphogenetic protein/transforming growth factor-beta) signaling pathway and modulates extracellular matrix (ECM) proteins of the sclera. Plays a role in eye development. The protein is Zinc transporter ZIP5 of Homo sapiens (Human).